We begin with the raw amino-acid sequence, 201 residues long: CMRF35-like molecule 7 (201 aa).

Positions 1–17 are cleaved as a signal peptide; sequence MWLPPALLLLSLSGCFS. One can recognise an Ig-like V-type domain in the interval 18–120; the sequence is IQGPESVRAP…PDLGTQVKVI (103 aa). The Extracellular segment spans residues 18–151; that stretch reads IQGPESVRAP…FIGSHKRNHY (134 aa). C36 and C104 are joined by a disulfide. The chain crosses the membrane as a helical span at residues 152 to 172; it reads MLLVFVKVPILLILVTAILWL. Over 173 to 201 the chain is Cytoplasmic; the sequence is KGSQRVPEEPGEQPIYMNFSEPLTKDMAT. Y188 bears the Phosphotyrosine; by FYN mark.

Belongs to the CD300 family. In terms of assembly, interacts with TYROBP, which enhances cell surface expression and activation properties. Interacts with GRB2 in the presence of FYN. Post-translationally, phosphorylation on Tyr-188 by FYN is required for interaction with GRB2. Expressed exclusively in myeloid lineages.

Its subcellular location is the cell membrane. Functionally, acts as an activating immune receptor through its interaction with ITAM-bearing adapter TYROBP, and also independently by recruitment of GRB2. This Homo sapiens (Human) protein is CMRF35-like molecule 7 (CD300LB).